The sequence spans 701 residues: MAVTVLPSVSGLSAVASSSNLRRLTSASNHRLTAIKSVTSTSSPPTPSSGVQRRRKNNDENRATVAKVVENPYSKVEAARPDLQKRLSDFLEEAREFVGDGGGPPRWFSPLECGAQATNSPLLLYLPGIDGTGLGLIRHHKKLGEIFDIWCLHIPVSDRTPVKDLVKLIEETVKSENFRLPNRPIYLVGESIGACLALDVAARNPNIDLSLILVNPATHVNNFMVQPLSGMLNVLPDGLPTLLEDIFDFGFKQGDPLTGMLDALSNEFSVQRMGGVGGGMLRDVLAVSANLPTLSRMFPKDTLLWKLEMLKYAIASVNSHIYSVRAETLILLSGRDHWLLKEEDIDRYSRTLPKCIVRKLDDNGQFPLLEDGVDLATIIKCTCFYRRGKSHDHITDYIMPTTFELKQQVDDHRLLMDGTSPVMLSTLEDGTVVRSLEGLPSEGPVLYVGYHMILGFELAPMVIQLMTERNIHLRGLAHPMLFKNLQDSLVDTKMFDKYKIMGGVPVSHFNIYKLLREKAHVLLYPGGVREALHRKGEEYKLFWPERSEFVRVASKFGAKIVPFGVVGEDDICEIVLDSNDQRNIPILKDLMEKATKDAGNIREGDESELGNQECYFPGLVPKIPGRFYYYFGKPIETAGKEKELKDKEKAQELYLQVKSEVEQCIDYLKVKRESDPYRHLLPRMLYQASHGWSSEIPTFDL.

The transit peptide at 1–65 (MAVTVLPSVS…KNNDENRATV (65 aa)) directs the protein to the chloroplast. Residues 37-64 (SVTSTSSPPTPSSGVQRRRKNNDENRAT) form a disordered region.

The protein belongs to the diacylglycerol acyltransferase family.

It localises to the plastid. Its subcellular location is the chloroplast. The protein localises to the plastoglobule. It carries out the reaction a 1,2-diacyl-3-O-(beta-D-galactosyl)-sn-glycerol + a 1,2-diacylglycerol = an acyl-3-O-(beta-D-galactosyl)-sn-glycerol + a triacylglycerol. The enzyme catalyses a 1,2-diacylglycerol + a fatty acyl-CoA = a triacylglycerol + CoA. It catalyses the reaction a fatty acyl-[ACP] + a 1,2-diacylglycerol = a triacylglycerol + holo-[ACP]. The catalysed reaction is phytol + a fatty acyl-CoA = a fatty acid phytyl ester + CoA. It carries out the reaction phytol + tetradecanoyl-CoA = tetradecanoate phytyl ester + CoA. The enzyme catalyses a 1,3-diacylglycerol + a fatty acyl-CoA = a triacylglycerol + CoA. It catalyses the reaction 1,2-dihexanoylglycerol + tetradecanoyl-CoA = 1,2-dihexanoyl-3-tetradecanoylglycerol + CoA. The catalysed reaction is 1,2-dihexanoylglycerol + hexadecanoyl-CoA = 1,2-dihexanoyl-3-hexadecanoylglycerol + CoA. It carries out the reaction 1,2-dihexanoylglycerol + octadecanoyl-CoA = 1,2-dihexanoyl-3-octadecanoylglycerol + CoA. The enzyme catalyses (7Z,10Z,13Z)-hexadecatrienoyl-CoA + 1,2-dihexanoylglycerol = 1,2-dihexanoyl-3-(7Z,10Z,13Z-hexadecatrienoyl)-glycerol + CoA. It catalyses the reaction 1,2-dihexanoylglycerol + (9Z)-octadecenoyl-CoA = 1,2-dihexanoyl-3-(9Z-octadecenoyl)-glycerol + CoA. The catalysed reaction is 1,2-dihexanoylglycerol + (9Z,12Z,15Z)-octadecatrienoyl-CoA = 1,2-dihexanoyl-3-(9Z,12Z,15Z-octadecatrienoyl)-glycerol + CoA. It carries out the reaction phytol + decanoyl-CoA = decanoate phytyl ester + CoA. The enzyme catalyses (7Z,10Z,13Z)-hexadecatrienoyl-CoA + phytol = (7Z,10Z,13Z)-hexadecatrienoate phytyl ester + CoA. It catalyses the reaction phytol + dodecanoyl-CoA = dodecanoate phytyl ester + CoA. Its function is as follows. Acyltransferase involved in fatty acid phytyl ester synthesis in chloroplasts, a process required for the maintenance of the photosynthetic membrane integrity during abiotic stress and senescence. Exhibits phytyl ester synthesis and diacylglycerol acyltransferase activities with broad substrate specificities, and can employ acyl-CoAs, acyl carrier proteins, and galactolipids as acyl donors. This Arabidopsis thaliana (Mouse-ear cress) protein is Phytyl ester synthase 2, chloroplastic.